Consider the following 113-residue polypeptide: U11-theraphotoxin-Hhn1a (113 aa).

Positions 1–21 are cleaved as a signal peptide; that stretch reads MNTVRVTFLLVFVLAVSLGQA. A propeptide spanning residues 22–74 is cleaved from the precursor; that stretch reads DKDENRMEMQEKTEQGRSYLDFAENLLLQKLEELEAKLLEEDSEESRNSRQKR. Residues 61-83 form a disordered region; it reads EEDSEESRNSRQKRCIGEGVPCD. Intrachain disulfides connect Cys75–Cys90, Cys82–Cys95, and Cys89–Cys110.

The protein belongs to the neurotoxin 14 (magi-1) family. 01 (HNTX-16) subfamily. In terms of tissue distribution, expressed by the venom gland.

It localises to the secreted. Its function is as follows. Probable ion channel inhibitor. The polypeptide is U11-theraphotoxin-Hhn1a (Cyriopagopus hainanus (Chinese bird spider)).